Consider the following 175-residue polypeptide: Nucleoplasmin-3 (175 aa).

An N-acetylalanine modification is found at Ala2. A Phosphoserine modification is found at Ser16. Arg27 bears the Omega-N-methylarginine mark. Residues Ser147 and Ser151 each carry the phosphoserine modification.

Belongs to the nucleoplasmin family. As to quaternary structure, interacts with NPM (via N-terminus). Forms a pentamer with NPM at a ratio 4:1 (NPM3/NPM). Two pentamers form a decamer. Phosphorylated. Predominantly expressed in testis.

Its subcellular location is the nucleus. The protein resides in the nucleolus. Functionally, plays a role in the regulation of diverse cellular processes such as ribosome biogenesis, chromatin remodeling or protein chaperoning. Modulates the histone chaperone function and the RNA-binding activity of nucleolar phosphoprotein B23/NPM. Efficiently mediates chromatin remodeling when included in a pentamer containing NPM3 and NPM. This Mus musculus (Mouse) protein is Nucleoplasmin-3 (Npm3).